Here is a 638-residue protein sequence, read N- to C-terminus: Probable beta-glucosidase C (638 aa).

An N-terminal signal peptide occupies residues 1-18; it reads MKVLAPGYLAEASLTALA. Asn-40, Asn-94, Asn-116, Asn-223, and Asn-274 each carry an N-linked (GlcNAc...) asparagine glycan. Asp-341 is an active-site residue. Residues Asn-364, Asn-480, Asn-488, and Asn-528 are each glycosylated (N-linked (GlcNAc...) asparagine).

The protein belongs to the glycosyl hydrolase 3 family.

Its subcellular location is the secreted. It catalyses the reaction Hydrolysis of terminal, non-reducing beta-D-glucosyl residues with release of beta-D-glucose.. The protein operates within glycan metabolism; cellulose degradation. Its function is as follows. Beta-glucosidases are one of a number of cellulolytic enzymes involved in the degradation of cellulosic biomass. Catalyzes the last step releasing glucose from the inhibitory cellobiose. This Aspergillus oryzae (strain ATCC 42149 / RIB 40) (Yellow koji mold) protein is Probable beta-glucosidase C (bglC).